A 394-amino-acid chain; its full sequence is Elongation factor Tu (394 aa).

The tr-type G domain occupies 10–204; that stretch reads KEHANIGTIG…AVDDYIPTPE (195 aa). The G1 stretch occupies residues 19–26; the sequence is GHVDHGKT. Residue 19-26 participates in GTP binding; sequence GHVDHGKT. Thr-26 lines the Mg(2+) pocket. The interval 60–64 is G2; it reads GITIN. The interval 81–84 is G3; it reads DCPG. GTP is bound by residues 81-85 and 136-139; these read DCPGH and NKVD. Residues 136–139 form a G4 region; the sequence is NKVD. The segment at 174–176 is G5; the sequence is SAL.

It belongs to the TRAFAC class translation factor GTPase superfamily. Classic translation factor GTPase family. EF-Tu/EF-1A subfamily. Monomer.

The protein localises to the cytoplasm. The catalysed reaction is GTP + H2O = GDP + phosphate + H(+). GTP hydrolase that promotes the GTP-dependent binding of aminoacyl-tRNA to the A-site of ribosomes during protein biosynthesis. The protein is Elongation factor Tu of Staphylococcus epidermidis (strain ATCC 35984 / DSM 28319 / BCRC 17069 / CCUG 31568 / BM 3577 / RP62A).